A 178-amino-acid chain; its full sequence is Cytochrome b6-f complex subunit 4 (178 aa).

3 helical membrane passes run 36-56, 95-115, and 131-151; these read LSYI…GLAV, LLGV…PFLE, and TVSL…ALPI.

The protein belongs to the cytochrome b family. PetD subfamily. The 4 large subunits of the cytochrome b6-f complex are cytochrome b6, subunit IV (17 kDa polypeptide, petD), cytochrome f and the Rieske protein, while the 4 small subunits are petG, petL, petM and petN. The complex functions as a dimer.

Its subcellular location is the plastid. The protein resides in the chloroplast thylakoid membrane. Its function is as follows. Component of the cytochrome b6-f complex, which mediates electron transfer between photosystem II (PSII) and photosystem I (PSI), cyclic electron flow around PSI, and state transitions. This chain is Cytochrome b6-f complex subunit 4, found in Picea abies (Norway spruce).